The primary structure comprises 479 residues: Poly(A) polymerase catalytic subunit (479 aa).

Catalysis depends on residues Asp-202 and Asp-204. Asp-202, Asp-204, and Asp-253 together coordinate Ca(2+).

This sequence belongs to the poxviridae poly(A) polymerase catalytic subunit family. Heterodimer of a large (catalytic) subunit and a small (regulatory) subunit.

The enzyme catalyses RNA(n) + ATP = RNA(n)-3'-adenine ribonucleotide + diphosphate. In terms of biological role, polymerase that creates the 3'-poly(A) tail of mRNA's. The polypeptide is Poly(A) polymerase catalytic subunit (OPG063) (Camelus).